A 114-amino-acid chain; its full sequence is Gene 37 protein (114 aa).

This chain is Gene 37 protein (37), found in Mycobacterium (Mycobacteriophage L5).